We begin with the raw amino-acid sequence, 45 residues long: uncharacterized protein (45 aa).

The chain crosses the membrane as a helical span at residues 10–27; sequence LLYFVLFVDIYGIFTNNI.

The protein localises to the membrane. This is an uncharacterized protein from Dictyostelium discoideum (Social amoeba).